The sequence spans 349 residues: UDP-N-acetylenolpyruvoylglucosamine reductase (349 aa).

An FAD-binding PCMH-type domain is found at Phe-24–Arg-197. The active site involves Arg-173. Residue Ser-249 is the Proton donor of the active site. Residue Glu-345 is part of the active site.

It belongs to the MurB family. FAD is required as a cofactor.

The protein resides in the cytoplasm. It catalyses the reaction UDP-N-acetyl-alpha-D-muramate + NADP(+) = UDP-N-acetyl-3-O-(1-carboxyvinyl)-alpha-D-glucosamine + NADPH + H(+). The protein operates within cell wall biogenesis; peptidoglycan biosynthesis. Its function is as follows. Cell wall formation. The sequence is that of UDP-N-acetylenolpyruvoylglucosamine reductase from Burkholderia ambifaria (strain ATCC BAA-244 / DSM 16087 / CCUG 44356 / LMG 19182 / AMMD) (Burkholderia cepacia (strain AMMD)).